Consider the following 864-residue polypeptide: Alanine--tRNA ligase (864 aa).

H534, H538, C639, and H643 together coordinate Zn(2+).

This sequence belongs to the class-II aminoacyl-tRNA synthetase family. It depends on Zn(2+) as a cofactor.

The protein resides in the cytoplasm. The catalysed reaction is tRNA(Ala) + L-alanine + ATP = L-alanyl-tRNA(Ala) + AMP + diphosphate. Functionally, catalyzes the attachment of alanine to tRNA(Ala) in a two-step reaction: alanine is first activated by ATP to form Ala-AMP and then transferred to the acceptor end of tRNA(Ala). Also edits incorrectly charged Ser-tRNA(Ala) and Gly-tRNA(Ala) via its editing domain. This chain is Alanine--tRNA ligase, found in Onion yellows phytoplasma (strain OY-M).